The sequence spans 489 residues: MLPRPYIFSHNDGPSSHLFQHVLPHNVSQQQRIEAHLNSTNNFIGPPMNAPRFIPTYQWTPVELSDVACSPNGPMGNNRKRRIQDNSDINLKRQRFSCPSPHNQSARNSNFTSQPVTRPVTGREVTCPTCSSATFIPGGCVPSLGETCHQNAFSPSSVKDKLSQQILNLFFACEQQSDDLEKKESCRAALQTDIQKIFPCAKVFLGGSSLNGFGSRSSDADLCLVIEEGPVNHRKDAVYVLSLVRKLLYKLSYIEKPQLIRAKVPIVKFRDRISGVEFDLNFNNTVGIRNTFLLRTYAFVEKRVRPLVLVIKKWANHHCINDASRGTLSSYTLVLMVLHYLQTLPEPVIPCLQRDYPTCFDPKMDIHLVPSGPSDIPAFVSRNQSSLGDLFLGFLRYYATVFKWDKQVISVRMARTLPKSNCKEWKDKFICVEEPFNRTNTARAVHERMKFEAIKAAFIESHRLLQLRKDLNFILPKSKQMARPQTAPR.

The disordered stretch occupies residues R93 to R118. The segment covering S100–V116 has biased composition (polar residues). Residues D219 and D221 each coordinate Mg(2+). The PAP-associated domain maps to S386–N440.

This sequence belongs to the DNA polymerase type-B-like family. GLD2 subfamily. The cofactor is Mg(2+). Mn(2+) is required as a cofactor.

The protein resides in the cytoplasm. The catalysed reaction is RNA(n) + ATP = RNA(n)-3'-adenine ribonucleotide + diphosphate. Its function is as follows. Cytoplasmic poly(A) RNA polymerase that adds successive AMP monomers to the 3'-end of specific RNAs, forming a poly(A) tail. In contrast to the canonical nuclear poly(A) RNA polymerase, it only adds poly(A) to selected cytoplasmic mRNAs. May not play a role in replication-dependent histone mRNA degradation. This Danio rerio (Zebrafish) protein is Poly(A) RNA polymerase GLD2.